A 419-amino-acid chain; its full sequence is Ribosomal RNA large subunit methyltransferase G (419 aa).

Residues 386–408 are compositionally biased toward basic and acidic residues; that stretch reads KAEPFETHPTEAEAKVEVTESKP. Residues 386–419 are disordered; sequence KAEPFETHPTEAEAKVEVTESKPHPQSSLYGTKK. Residues 409–419 show a composition bias toward polar residues; the sequence is HPQSSLYGTKK.

It belongs to the methyltransferase superfamily. RlmG family.

The protein localises to the cytoplasm. It carries out the reaction guanosine(1835) in 23S rRNA + S-adenosyl-L-methionine = N(2)-methylguanosine(1835) in 23S rRNA + S-adenosyl-L-homocysteine + H(+). Specifically methylates the guanine in position 1835 (m2G1835) of 23S rRNA. The protein is Ribosomal RNA large subunit methyltransferase G of Shewanella woodyi (strain ATCC 51908 / MS32).